The primary structure comprises 469 residues: 3-isopropylmalate dehydratase large subunit (469 aa).

[4Fe-4S] cluster contacts are provided by Cys349, Cys410, and Cys413.

This sequence belongs to the aconitase/IPM isomerase family. LeuC type 1 subfamily. Heterodimer of LeuC and LeuD. [4Fe-4S] cluster serves as cofactor.

It catalyses the reaction (2R,3S)-3-isopropylmalate = (2S)-2-isopropylmalate. It functions in the pathway amino-acid biosynthesis; L-leucine biosynthesis; L-leucine from 3-methyl-2-oxobutanoate: step 2/4. Catalyzes the isomerization between 2-isopropylmalate and 3-isopropylmalate, via the formation of 2-isopropylmaleate. This chain is 3-isopropylmalate dehydratase large subunit, found in Neisseria meningitidis serogroup C / serotype 2a (strain ATCC 700532 / DSM 15464 / FAM18).